Here is a 675-residue protein sequence, read N- to C-terminus: Potassium-transporting ATPase ATP-binding subunit 2 (675 aa).

Transmembrane regions (helical) follow at residues isoleucine 34–isoleucine 54, leucine 65–phenylalanine 85, isoleucine 216–leucine 236, and leucine 245–glycine 265. Aspartate 304 (4-aspartylphosphate intermediate) is an active-site residue. ATP-binding positions include aspartate 341, glutamate 345, phenylalanine 372–serine 379, and lysine 390. Aspartate 513 and aspartate 517 together coordinate Mg(2+). A run of 3 helical transmembrane segments spans residues alanine 569–methionine 591, alanine 611–methionine 631, and isoleucine 644–isoleucine 664.

It belongs to the cation transport ATPase (P-type) (TC 3.A.3) family. Type IA subfamily. As to quaternary structure, the system is composed of three essential subunits: KdpA, KdpB and KdpC.

Its subcellular location is the cell membrane. It catalyses the reaction K(+)(out) + ATP + H2O = K(+)(in) + ADP + phosphate + H(+). Functionally, part of the high-affinity ATP-driven potassium transport (or Kdp) system, which catalyzes the hydrolysis of ATP coupled with the electrogenic transport of potassium into the cytoplasm. This subunit is responsible for energy coupling to the transport system and for the release of the potassium ions to the cytoplasm. The chain is Potassium-transporting ATPase ATP-binding subunit 2 from Staphylococcus aureus (strain Mu50 / ATCC 700699).